A 388-amino-acid chain; its full sequence is tRNA-specific adenosine deaminase 1 (388 aa).

The A to I editase domain occupies 63–388; sequence CLATGVKCTP…PNGGNEFQWI (326 aa). Residue His89 participates in Zn(2+) binding. The active-site Proton donor is Glu91. Residue Arg96 coordinates 1D-myo-inositol hexakisphosphate. Residues Cys144 and Cys201 each contribute to the Zn(2+) site. The 1D-myo-inositol hexakisphosphate site is built by Lys204, Lys357, and Arg363.

The protein belongs to the ADAT1 family. The cofactor is 1D-myo-inositol hexakisphosphate. Zn(2+) is required as a cofactor.

The protein resides in the cytoplasm. The protein localises to the nucleus. It catalyses the reaction adenosine(37) in tRNA(Ala) + H2O + H(+) = inosine(37) in tRNA(Ala) + NH4(+). Functionally, deaminates adenosine-37 to inosine in tRNA-Ala. This chain is tRNA-specific adenosine deaminase 1, found in Schizosaccharomyces pombe (strain 972 / ATCC 24843) (Fission yeast).